Consider the following 784-residue polypeptide: Lon protease (784 aa).

In terms of domain architecture, Lon N-terminal spans 11–204 (IPVLPLRDVV…YLMAMMESEI (194 aa)). Residue 356–363 (GPPGVGKT) participates in ATP binding. Positions 592 to 773 (ENRVGQVTGL…EEVLTLALQN (182 aa)) constitute a Lon proteolytic domain. Residues Ser679 and Lys722 contribute to the active site.

It belongs to the peptidase S16 family. As to quaternary structure, homohexamer. Organized in a ring with a central cavity. ATP binding and hydrolysis do not affect the oligomeric state of the enzyme.

It localises to the cytoplasm. It carries out the reaction Hydrolysis of proteins in presence of ATP.. With respect to regulation, contains an allosteric site (distinct from its active site), whose occupancy by an unfolded polypeptide leads to enzyme activation. Its function is as follows. ATP-dependent serine protease that mediates the selective degradation of mutant and abnormal proteins as well as certain short-lived regulatory proteins. Required for cellular homeostasis and for survival from DNA damage and developmental changes induced by stress. Degrades polypeptides processively to yield small peptide fragments that are 5 to 10 amino acids long. Binds to DNA in a double-stranded, site-specific manner. Endogenous substrates include the regulatory proteins RcsA and SulA, the transcriptional activator SoxS, and UmuD. Its overproduction specifically inhibits translation through at least two different pathways, one of them being the YoeB-YefM toxin-antitoxin system. The protein is Lon protease of Escherichia coli O6:H1 (strain CFT073 / ATCC 700928 / UPEC).